We begin with the raw amino-acid sequence, 471 residues long: Glutamate--tRNA ligase 1 (471 aa).

The short motif at 15–25 (PSPTGYLHIGG) is the 'HIGH' region element. Positions 243–247 (KLSKR) match the 'KMSKS' region motif. Lys246 lines the ATP pocket.

This sequence belongs to the class-I aminoacyl-tRNA synthetase family. Glutamate--tRNA ligase type 1 subfamily. Monomer.

It is found in the cytoplasm. It catalyses the reaction tRNA(Glu) + L-glutamate + ATP = L-glutamyl-tRNA(Glu) + AMP + diphosphate. Functionally, catalyzes the attachment of glutamate to tRNA(Glu) in a two-step reaction: glutamate is first activated by ATP to form Glu-AMP and then transferred to the acceptor end of tRNA(Glu). The protein is Glutamate--tRNA ligase 1 of Cereibacter sphaeroides (strain ATCC 17023 / DSM 158 / JCM 6121 / CCUG 31486 / LMG 2827 / NBRC 12203 / NCIMB 8253 / ATH 2.4.1.) (Rhodobacter sphaeroides).